A 293-amino-acid polypeptide reads, in one-letter code: MSQVRSKSQQGKRQAKPQEVVPATILTEQLSTYAFGTVTAGAVMVAVAAWMGGSLASIDERIQGGLDATAKSAGFTVTKISIEGLDPRTKADVLNAVAIPVDSNMFRADPFVIKERIEASVENVSEVRVLRQWPNDIWILAENRRPLALWQTDGEWKVVDQVGKPMDGEDPAEYVELPRVVGPAGGYAAPELLAQLKLHPQISEHLEVAMRVGGRRWDLRLDSGLEIALPEDAQVDEALLAVYNLDEATGVLAEDSEVTRIDARDLERFAVGLGEARAAYDQSSQIDDKSGGA.

Residues 1 to 29 (MSQVRSKSQQGKRQAKPQEVVPATILTEQ) lie on the Cytoplasmic side of the membrane. The chain crosses the membrane as a helical span at residues 30–52 (LSTYAFGTVTAGAVMVAVAAWMG). Residues 53–293 (GSLASIDERI…SQIDDKSGGA (241 aa)) lie on the Periplasmic side of the membrane. Positions 75–144 (FTVTKISIEG…NDIWILAENR (70 aa)) constitute a POTRA domain.

This sequence belongs to the FtsQ/DivIB family. FtsQ subfamily.

The protein resides in the cell inner membrane. Functionally, essential cell division protein. This Hirschia baltica (strain ATCC 49814 / DSM 5838 / IFAM 1418) protein is Cell division protein FtsQ.